Reading from the N-terminus, the 122-residue chain is Large ribosomal subunit protein uL14 (122 aa).

The protein belongs to the universal ribosomal protein uL14 family. In terms of assembly, part of the 50S ribosomal subunit. Forms a cluster with proteins L3 and L19. In the 70S ribosome, L14 and L19 interact and together make contacts with the 16S rRNA in bridges B5 and B8.

Binds to 23S rRNA. Forms part of two intersubunit bridges in the 70S ribosome. The chain is Large ribosomal subunit protein uL14 from Anaeromyxobacter dehalogenans (strain 2CP-1 / ATCC BAA-258).